Here is a 276-residue protein sequence, read N- to C-terminus: Diaminopimelate epimerase (276 aa).

Residues Asn-13, Gln-46, and Asn-66 each coordinate substrate. Cys-75 acts as the Proton donor in catalysis. Substrate-binding positions include 76 to 77 (GN), Asn-159, Asn-192, and 210 to 211 (ER). Residue Cys-219 is the Proton acceptor of the active site. Residue 220–221 (GT) coordinates substrate.

Belongs to the diaminopimelate epimerase family. Homodimer.

It is found in the cytoplasm. It catalyses the reaction (2S,6S)-2,6-diaminopimelate = meso-2,6-diaminopimelate. The protein operates within amino-acid biosynthesis; L-lysine biosynthesis via DAP pathway; DL-2,6-diaminopimelate from LL-2,6-diaminopimelate: step 1/1. Its function is as follows. Catalyzes the stereoinversion of LL-2,6-diaminopimelate (L,L-DAP) to meso-diaminopimelate (meso-DAP), a precursor of L-lysine and an essential component of the bacterial peptidoglycan. The protein is Diaminopimelate epimerase of Teredinibacter turnerae (strain ATCC 39867 / T7901).